The following is a 788-amino-acid chain: Spastin (788 aa).

Residues 1–105 are disordered; sequence MVRTKNQSSS…PRSAGGPSSV (105 aa). Residues 1-116 lie on the Cytoplasmic side of the membrane; sequence MVRTKNQSSS…KQNLYVVSFP (116 aa). The segment at 1–227 is required for localization to punctate cytoplasmic foci; it reads MVRTKNQSSS…NRSGSGYSPG (227 aa). Low complexity-rich tracts occupy residues 8–48 and 57–75; these read SSSS…SSHR and ATNV…SSPD. The helical intramembrane region spans 117–137; the sequence is IIFLFNVLRSLIYQLFCIFRY. The Cytoplasmic segment spans residues 138-788; the sequence is LYGASTKVIY…WSSDYGDITI (651 aa). The tract at residues 227–788 is sufficient for interaction with microtubules and microtubule severing; sequence GPGDPLLAKQ…WSSDYGDITI (562 aa). Residues 240–315 enclose the MIT domain; that stretch reads HRRAFEYISK…SMARDRLHFL (76 aa). A compositionally biased stretch (basic and acidic residues) spans 330–353; it reads KEEQKPNPSREQHQKPQKAREAAD. The tract at residues 330-484 is disordered; sequence KEEQKPNPSR…SGSGSGASTP (155 aa). A compositionally biased stretch (low complexity) spans 380 to 400; it reads LTTPRISATATTPTSSSSLAS. Composition is skewed to polar residues over residues 419-433 and 453-469; these read NKSQ…SKTS and QFSS…RTPI. Residues 471 to 485 are required for interaction with microtubules; sequence NNGASGSGSGASTPV. Residue 553 to 560 coordinates ATP; that stretch reads GPPGNGKT.

The protein belongs to the AAA ATPase family. Spastin subfamily. Homohexamer. The homohexamer is stabilized by ATP-binding. The homohexamer may adopt a ring conformation through which microtubules pass prior to being severed. Interacts with microtubules. Interacts with atl; may be involved in microtubule dynamics.

The protein localises to the membrane. It localises to the cytoplasm. Its subcellular location is the cytoskeleton. The protein resides in the microtubule organizing center. It is found in the centrosome. The protein localises to the chromosome. It localises to the lipid droplet. It catalyses the reaction n ATP + n H2O + a microtubule = n ADP + n phosphate + (n+1) alpha/beta tubulin heterodimers.. Functionally, ATP-dependent microtubule severing protein. Stimulates microtubule minus-end depolymerization and poleward microtubule flux in the mitotic spindle. Regulates microtubule stability in the neuromuscular junction synapse. Involved in lipid metabolism by regulating the size and distribution of lipid droplets. Involved in axon regeneration by regulating microtubule severing. In Drosophila pseudoobscura pseudoobscura (Fruit fly), this protein is Spastin.